A 306-amino-acid chain; its full sequence is Bifunctional protein FolD (306 aa).

NADP(+) is bound by residues 166 to 168 (GRS) and isoleucine 232.

The protein belongs to the tetrahydrofolate dehydrogenase/cyclohydrolase family. In terms of assembly, homodimer.

It catalyses the reaction (6R)-5,10-methylene-5,6,7,8-tetrahydrofolate + NADP(+) = (6R)-5,10-methenyltetrahydrofolate + NADPH. The catalysed reaction is (6R)-5,10-methenyltetrahydrofolate + H2O = (6R)-10-formyltetrahydrofolate + H(+). Its pathway is one-carbon metabolism; tetrahydrofolate interconversion. Functionally, catalyzes the oxidation of 5,10-methylenetetrahydrofolate to 5,10-methenyltetrahydrofolate and then the hydrolysis of 5,10-methenyltetrahydrofolate to 10-formyltetrahydrofolate. In Methylorubrum extorquens (strain CM4 / NCIMB 13688) (Methylobacterium extorquens), this protein is Bifunctional protein FolD.